A 291-amino-acid chain; its full sequence is Small ribosomal subunit biogenesis GTPase RsgA (291 aa).

One can recognise a CP-type G domain in the interval 63–221 (QNELKRPPVS…VADTPGFSAL (159 aa)). GTP is bound by residues 112 to 115 (TKKD) and 164 to 172 (GQSGVGKST). Zn(2+) contacts are provided by Cys-245, Cys-250, His-252, and Cys-258.

It belongs to the TRAFAC class YlqF/YawG GTPase family. RsgA subfamily. As to quaternary structure, monomer. Associates with 30S ribosomal subunit, binds 16S rRNA. Requires Zn(2+) as cofactor.

It localises to the cytoplasm. In terms of biological role, one of several proteins that assist in the late maturation steps of the functional core of the 30S ribosomal subunit. Helps release RbfA from mature subunits. May play a role in the assembly of ribosomal proteins into the subunit. Circularly permuted GTPase that catalyzes slow GTP hydrolysis, GTPase activity is stimulated by the 30S ribosomal subunit. This chain is Small ribosomal subunit biogenesis GTPase RsgA, found in Staphylococcus carnosus (strain TM300).